Consider the following 132-residue polypeptide: MSMSDPLGDMLTRIRNALARKKGKLVTPASKLRACVLDVLQSEGYIRGYNQVDLGDGKSEIEIELKYFEGLAAIRELSRVSKPGRRVYVSAKSLPQVANGLGVSILSTPKGIMADHEAREQNVGGELLCRVF.

Belongs to the universal ribosomal protein uS8 family. As to quaternary structure, part of the 30S ribosomal subunit. Contacts proteins S5 and S12.

In terms of biological role, one of the primary rRNA binding proteins, it binds directly to 16S rRNA central domain where it helps coordinate assembly of the platform of the 30S subunit. The chain is Small ribosomal subunit protein uS8 from Bartonella quintana (strain Toulouse) (Rochalimaea quintana).